We begin with the raw amino-acid sequence, 519 residues long: MADTEEAYGMPDTPVEAEPKELQCEPKQDNQMGASSKTPTSPQAAFTQQGMEGIKVFLHERELWLKFHEVGTEMIITKAGRRMFPSYKVKVTGLNPKTKYILLMDIVPADDHRYKFADNKWSVTGKAEPAMPGRLYVHPDSPATGTHWMRQLVSSQKLKLTNNHLDPFGHIILNSMHKYQPRLHIVKADENNGFGSKNTAFCTHVFSETAFIAATSYQNHKITQLKIENNPFAKGFRGSDDMELHRMSRMQSKEYPVVPRSTVRQKVSSNHSPFSQETRNITGSSTLNSQYQCENGVSSTSQDLLPPSSAYPSLPHESAPIYHCTKRKVSEEPAELSYKKPYMDTSPSEEDPYYRSGYPQPSSSSSSNNSFRTESAQRQACMYASSAPATEPVPSLEDISCNSWSSVPPYSSCTVGGGMQPMERLPYQHFSAHFTSSSLMPRLSNHGSTQPSDSHSMFQHQSTHQTIVRQCNPQPGLQQSSALQSTEFLYPHSVPRTISPHQYHSVHGVGMAPDWNENS.

Residues Met1–Gln43 form a disordered region. Basic and acidic residues predominate over residues Ala17 to Gln28. Over residues Asp29 to Gln43 the composition is skewed to polar residues. A DNA-binding region (T-box) is located at residues Leu63–Gly238. Disordered regions lie at residues Glu254–Pro312 and Glu335–Ala376. Residues Thr262–Asp303 show a composition bias toward polar residues.

In terms of assembly, monomer. Homodimer (via the T-box); binds DNA as homodimer.

It localises to the nucleus. The protein resides in the cytoplasm. In terms of biological role, DNA-binding protein that regulates the transcription of several genes and is involved in heart development and limb pattern formation. May bind to the core DNA motif of promoters. The sequence is that of T-box transcription factor TBX5 (tbx5) from Xenopus tropicalis (Western clawed frog).